Here is a 205-residue protein sequence, read N- to C-terminus: Holliday junction branch migration complex subunit RuvA (205 aa).

The interval Met1–Asn67 is domain I. Residues Thr68–Val146 are domain II. The flexible linker stretch occupies residues Ala147–Tyr150. The tract at residues Tyr150 to Ala205 is domain III.

This sequence belongs to the RuvA family. Homotetramer. Forms an RuvA(8)-RuvB(12)-Holliday junction (HJ) complex. HJ DNA is sandwiched between 2 RuvA tetramers; dsDNA enters through RuvA and exits via RuvB. An RuvB hexamer assembles on each DNA strand where it exits the tetramer. Each RuvB hexamer is contacted by two RuvA subunits (via domain III) on 2 adjacent RuvB subunits; this complex drives branch migration. In the full resolvosome a probable DNA-RuvA(4)-RuvB(12)-RuvC(2) complex forms which resolves the HJ.

The protein localises to the cytoplasm. In terms of biological role, the RuvA-RuvB-RuvC complex processes Holliday junction (HJ) DNA during genetic recombination and DNA repair, while the RuvA-RuvB complex plays an important role in the rescue of blocked DNA replication forks via replication fork reversal (RFR). RuvA specifically binds to HJ cruciform DNA, conferring on it an open structure. The RuvB hexamer acts as an ATP-dependent pump, pulling dsDNA into and through the RuvAB complex. HJ branch migration allows RuvC to scan DNA until it finds its consensus sequence, where it cleaves and resolves the cruciform DNA. This Mycoplasma genitalium (strain ATCC 33530 / DSM 19775 / NCTC 10195 / G37) (Mycoplasmoides genitalium) protein is Holliday junction branch migration complex subunit RuvA.